The chain runs to 473 residues: Photosystem II CP43 reaction center protein (473 aa).

Positions 1-14 (MKTLYSLRRSYPVE) are excised as a propeptide. Position 15 is an N-acetylthreonine (Thr-15). Thr-15 is modified (phosphothreonine). Transmembrane regions (helical) follow at residues 69–93 (LFEVAHFVPEKPMYEQGLILLPHLA), 134–155 (LIGPETLEESFPFFGYVWKDRN), 178–200 (KALYFGGVYDTWAPGGGDVRKIT), 255–275 (KPFAWARRAFVWSGEAYLSYS), and 291–312 (WFNNTVYPSEFYGPTGPEASQA). Glu-367 is a binding site for [CaMn4O5] cluster. Residues 447–471 (RARAAAAGFEKGIDRDFEPVLSMTP) traverse the membrane as a helical segment.

It belongs to the PsbB/PsbC family. PsbC subfamily. In terms of assembly, PSII is composed of 1 copy each of membrane proteins PsbA, PsbB, PsbC, PsbD, PsbE, PsbF, PsbH, PsbI, PsbJ, PsbK, PsbL, PsbM, PsbT, PsbX, PsbY, PsbZ, Psb30/Ycf12, at least 3 peripheral proteins of the oxygen-evolving complex and a large number of cofactors. It forms dimeric complexes. The cofactor is Binds multiple chlorophylls and provides some of the ligands for the Ca-4Mn-5O cluster of the oxygen-evolving complex. It may also provide a ligand for a Cl- that is required for oxygen evolution. PSII binds additional chlorophylls, carotenoids and specific lipids..

Its subcellular location is the plastid. It is found in the chloroplast thylakoid membrane. Its function is as follows. One of the components of the core complex of photosystem II (PSII). It binds chlorophyll and helps catalyze the primary light-induced photochemical processes of PSII. PSII is a light-driven water:plastoquinone oxidoreductase, using light energy to abstract electrons from H(2)O, generating O(2) and a proton gradient subsequently used for ATP formation. This Pinus koraiensis (Korean pine) protein is Photosystem II CP43 reaction center protein.